Consider the following 145-residue polypeptide: Fatty acid-binding protein homolog 4 (145 aa).

Belongs to the calycin superfamily. Fatty-acid binding protein (FABP) family.

The protein is Fatty acid-binding protein homolog 4 (lbp-4) of Caenorhabditis elegans.